Here is a 272-residue protein sequence, read N- to C-terminus: MHAASREAFERLIKTLDQGLKESDNAVGNGATTGTELFDVVDVLDQERSLRVAMVDAAATPEQRVELVKTLLSGKVTASTEEIVSAAVSQNWSNSQDFRTGLERLGRRALLRSAEAQGQLERVEEELFSLARILERESELELLLSDRAAAVDDRRDLLAKVLYGKVSSVTEALALQAVGRARKAPVDLLDDLCQEAASLNGYEVARVTSAGPLSEEQKASLSEKLHKIYGRKIAVHTEVDSSLLGGAVVRVGDEVIDGSTAGKLERMRRSLA.

Belongs to the ATPase delta chain family. In terms of assembly, F-type ATPases have 2 components, F(1) - the catalytic core - and F(0) - the membrane proton channel. F(1) has five subunits: alpha(3), beta(3), gamma(1), delta(1), epsilon(1). F(0) has three main subunits: a(1), b(2) and c(10-14). The alpha and beta chains form an alternating ring which encloses part of the gamma chain. F(1) is attached to F(0) by a central stalk formed by the gamma and epsilon chains, while a peripheral stalk is formed by the delta and b chains.

Its subcellular location is the cell membrane. Its function is as follows. F(1)F(0) ATP synthase produces ATP from ADP in the presence of a proton or sodium gradient. F-type ATPases consist of two structural domains, F(1) containing the extramembraneous catalytic core and F(0) containing the membrane proton channel, linked together by a central stalk and a peripheral stalk. During catalysis, ATP synthesis in the catalytic domain of F(1) is coupled via a rotary mechanism of the central stalk subunits to proton translocation. This protein is part of the stalk that links CF(0) to CF(1). It either transmits conformational changes from CF(0) to CF(1) or is implicated in proton conduction. This is ATP synthase subunit delta from Corynebacterium urealyticum (strain ATCC 43042 / DSM 7109).